We begin with the raw amino-acid sequence, 449 residues long: MTEEYWKGVDKIQYVGHQDKKSGLGFQYYNPEEEIMGKKMKDWLRFAVAYWHTFDQRLVDPFGDGTAQRPYDKYTDPMDLALAKVDAAFEFYQKLGVDYLCFHDRDLAPEGDTLRETNANLDKVVDKIVEYQKTSGMKVLWNTSNMFTNPRFVEGAATSPYADVFAYSAAQLKHSLEIGKRVGSENYVFWGGREGYESLWNTNMKQEQEHAAKIFHMAKDYANEIGFDAQMLLEPKPKEPTTHQYDFDAATTIAFMKEYDLDKDFKLNLEGNHANLAGHTYQHEIRVAREAGLLGSLDANQGDKLIGWDIDEYPSNLYETTAAMYEVVENGSIGPRGGLNFDAKPRRSSFAPEDLFLGHIVGMDSFAAGLRVAAAMKQDGFLDSLKADRYSSYKSGVGADIESGKADLKSLEAYAIDKPQSELIAATHSDHLEEIKDTINHYIIDTLSK.

Residues H103 and D106 contribute to the active site. Mg(2+) is bound by residues E234, E270, H273, D298, D309, D311, and D342.

It belongs to the xylose isomerase family. As to quaternary structure, homotetramer. It depends on Mg(2+) as a cofactor.

The protein resides in the cytoplasm. It carries out the reaction alpha-D-xylose = alpha-D-xylulofuranose. This chain is Xylose isomerase, found in Levilactobacillus brevis (strain ATCC 367 / BCRC 12310 / CIP 105137 / JCM 1170 / LMG 11437 / NCIMB 947 / NCTC 947) (Lactobacillus brevis).